Here is a 1097-residue protein sequence, read N- to C-terminus: Leukemia inhibitory factor receptor (1097 aa).

A signal peptide spans 1–44 (MMDIYVCLKRPSWMVDNKRMRTASNFQWLLSTFILLYLMNQVNS). At 45–833 (QKKGAPHDLK…SMYVVTKENS (789 aa)) the chain is on the extracellular side. The region spanning 49–138 (APHDLKCVTN…EQNVSLIPDT (90 aa)) is the Fibronectin type-III 1 domain. Disulfide bonds link C55/C65 and C82/C90. 7 N-linked (GlcNAc...) asparagine glycosylation sites follow: N64, N85, N131, N143, N191, N243, and N303. C213 and C270 form a disulfide bridge. Fibronectin type-III domains lie at 335–434 (TPQQ…VYPH), 435–534 (TPTS…TEAS), 538–629 (GPDT…IPND), 627–719 (PNDD…IGYI), and 724–833 (PIVA…KENS). C341 and C351 are joined by a disulfide. N-linked (GlcNAc...) asparagine glycans are attached at residues N390, N407, N426, N445, N481, and N489. A disulfide bond links C466 and C511. The WSXWS motif motif lies at 519-523 (WSKWS). N572, N652, N663, N680, N729, and N787 each carry an N-linked (GlcNAc...) asparagine glycan. A helical membrane pass occupies residues 834-858 (VGLIIAILIPVAVAVIVGVVTSILC). Over 859-1097 (YRKREWIKET…TNFFQNKPND (239 aa)) the chain is Cytoplasmic. A Box 1 motif motif is present at residues 869–877 (FYPDIPNPE). S927 carries the phosphoserine modification. The segment at 983 to 1005 (PQAKPEEEQENDPVGGAGYKPQM) is disordered. Residue S1044 is modified to Phosphoserine. The interval 1066 to 1097 (RQFLIPPKDEDSPKSNGGGWSFTNFFQNKPND) is disordered. The span at 1086-1097 (SFTNFFQNKPND) shows a compositional bias: polar residues.

The protein belongs to the type I cytokine receptor family. Type 2 subfamily. In terms of assembly, heterodimer composed of LIFR and IL6ST. The heterodimer formed by LIFR and IL6ST interacts with the complex formed by CNTF and CNTFR.

The protein resides in the cell membrane. The protein localises to the secreted. Functionally, signal-transducing molecule. May have a common pathway with IL6ST. The soluble form inhibits the biological activity of LIF by blocking its binding to receptors on target cells. The polypeptide is Leukemia inhibitory factor receptor (LIFR) (Homo sapiens (Human)).